A 39-amino-acid chain; its full sequence is Protein YkiC (39 aa).

A helical transmembrane segment spans residues 13–35 (LLSAKLCNCTQAIMTHIIASFLA).

The protein localises to the cell inner membrane. The sequence is that of Protein YkiC from Escherichia coli (strain K12).